The chain runs to 179 residues: Acireductone dioxygenase (179 aa).

A disordered region spans residues 1–21 (MVQAWYMDDSTEDQRKPHHLQ). The Fe(2+) site is built by His-88, His-90, Glu-94, and His-133. The Ni(2+) site is built by His-88, His-90, Glu-94, and His-133.

It belongs to the acireductone dioxygenase (ARD) family. As to quaternary structure, monomer. Interacts with MMP14. The cofactor is Fe(2+). Ni(2+) is required as a cofactor.

The protein localises to the cytoplasm. The protein resides in the nucleus. It localises to the cell membrane. The enzyme catalyses 1,2-dihydroxy-5-(methylsulfanyl)pent-1-en-3-one + O2 = 4-methylsulfanyl-2-oxobutanoate + formate + 2 H(+). The catalysed reaction is 1,2-dihydroxy-5-(methylsulfanyl)pent-1-en-3-one + O2 = 3-(methylsulfanyl)propanoate + CO + formate + 2 H(+). It functions in the pathway amino-acid biosynthesis; L-methionine biosynthesis via salvage pathway; L-methionine from S-methyl-5-thio-alpha-D-ribose 1-phosphate: step 5/6. In terms of biological role, catalyzes 2 different reactions between oxygen and the acireductone 1,2-dihydroxy-3-keto-5-methylthiopentene (DHK-MTPene) depending upon the metal bound in the active site. Fe-containing acireductone dioxygenase (Fe-ARD) produces formate and 2-keto-4-methylthiobutyrate (KMTB), the alpha-ketoacid precursor of methionine in the methionine recycle pathway. Ni-containing acireductone dioxygenase (Ni-ARD) produces methylthiopropionate, carbon monoxide and formate, and does not lie on the methionine recycle pathway. This Xenopus tropicalis (Western clawed frog) protein is Acireductone dioxygenase (adi1).